The primary structure comprises 235 residues: Phosphoribosylaminoimidazole-succinocarboxamide synthase (235 aa).

It belongs to the SAICAR synthetase family.

It carries out the reaction 5-amino-1-(5-phospho-D-ribosyl)imidazole-4-carboxylate + L-aspartate + ATP = (2S)-2-[5-amino-1-(5-phospho-beta-D-ribosyl)imidazole-4-carboxamido]succinate + ADP + phosphate + 2 H(+). It participates in purine metabolism; IMP biosynthesis via de novo pathway; 5-amino-1-(5-phospho-D-ribosyl)imidazole-4-carboxamide from 5-amino-1-(5-phospho-D-ribosyl)imidazole-4-carboxylate: step 1/2. The sequence is that of Phosphoribosylaminoimidazole-succinocarboxamide synthase from Thermococcus kodakarensis (strain ATCC BAA-918 / JCM 12380 / KOD1) (Pyrococcus kodakaraensis (strain KOD1)).